The following is a 514-amino-acid chain: Leucine-rich repeat-containing protein 14B (514 aa).

One copy of the LRR 1; degenerate repeat lies at 104–141 (RRRLRVADLTGIRDVQVQRCPCGRALGRWGRTQLLART). An LRR 2; degenerate repeat occupies 185–209 (RVHCPSFRADSLSPSQLLHVLRLAG). One copy of the LRR 4; degenerate repeat lies at 238–277 (FPRLASLTLPTKAFDAPPTYASTPDGEDPLLASIARELSK). LRR repeat units lie at residues 278–302 (MAQL…LGPL), 303–334 (QTPL…AHLE), 335–350 (VLDL…YPST), 359–386 (SRTL…GLSP), and 387–411 (CHRL…LFTA).

This sequence belongs to the PRAME family. LRRC14 subfamily.

The chain is Leucine-rich repeat-containing protein 14B from Homo sapiens (Human).